Here is a 447-residue protein sequence, read N- to C-terminus: tRNA-2-methylthio-N(6)-dimethylallyladenosine synthase (447 aa).

An MTTase N-terminal domain is found at 14 to 130 (KKVYIRTFGC…LPAMIANAGQ (117 aa)). Residues cysteine 23, cysteine 59, cysteine 93, cysteine 166, cysteine 170, and cysteine 173 each coordinate [4Fe-4S] cluster. In terms of domain architecture, Radical SAM core spans 152–382 (RSGTISAFIP…IALQGSISGE (231 aa)). Residues 385 to 447 (AAEVGAVVEV…TPATLIGTPA (63 aa)) form the TRAM domain.

It belongs to the methylthiotransferase family. MiaB subfamily. Monomer. It depends on [4Fe-4S] cluster as a cofactor.

The protein localises to the cytoplasm. The enzyme catalyses N(6)-dimethylallyladenosine(37) in tRNA + (sulfur carrier)-SH + AH2 + 2 S-adenosyl-L-methionine = 2-methylsulfanyl-N(6)-dimethylallyladenosine(37) in tRNA + (sulfur carrier)-H + 5'-deoxyadenosine + L-methionine + A + S-adenosyl-L-homocysteine + 2 H(+). Its function is as follows. Catalyzes the methylthiolation of N6-(dimethylallyl)adenosine (i(6)A), leading to the formation of 2-methylthio-N6-(dimethylallyl)adenosine (ms(2)i(6)A) at position 37 in tRNAs that read codons beginning with uridine. In Chlorobium phaeobacteroides (strain BS1), this protein is tRNA-2-methylthio-N(6)-dimethylallyladenosine synthase.